A 138-amino-acid polypeptide reads, in one-letter code: Transcription antitermination protein NusB (138 aa).

It belongs to the NusB family.

Functionally, involved in transcription antitermination. Required for transcription of ribosomal RNA (rRNA) genes. Binds specifically to the boxA antiterminator sequence of the ribosomal RNA (rrn) operons. The sequence is that of Transcription antitermination protein NusB from Coxiella burnetii (strain Dugway 5J108-111).